Here is a 1140-residue protein sequence, read N- to C-terminus: Receptor-type guanylate cyclase gcy-3 (1140 aa).

An N-terminal signal peptide occupies residues 1–21; it reads MKNVFQLLIPLFFHLFSLVSL. Residues 22–495 are Extracellular-facing; the sequence is QNIPVSTGTT…CPLPFWEQYG (474 aa). Residues Asn220, Asn301, Asn349, Asn385, Asn418, Asn441, and Asn459 are each glycosylated (N-linked (GlcNAc...) asparagine). A helical transmembrane segment spans residues 496–516; sequence ILIFVGAGVFLIMITTNLICF. The Cytoplasmic portion of the chain corresponds to 517–1140; sequence LFMIKNRREE…RQYKMDTLKI (624 aa). Residues 538-826 enclose the Protein kinase domain; sequence FVKLRELERK…NICEQLRDLM (289 aa). Residues 544-552 and Lys582 each bind ATP; that span reads LERKSKGTS. Residues 897 to 1027 enclose the Guanylate cyclase domain; that stretch reads TVFFSDVVKF…DTVNTASRME (131 aa). The tract at residues 1083-1140 is disordered; it reads PSISNRSTPPVTQERFTVRAPDTPEARSVSSHGSRPSSNHNNNNDPLYRQYKMDTLKI. The segment covering 1084-1097 has biased composition (polar residues); that stretch reads SISNRSTPPVTQER. The span at 1109 to 1126 shows a compositional bias: low complexity; sequence RSVSSHGSRPSSNHNNNN.

Belongs to the adenylyl cyclase class-4/guanylyl cyclase family. In terms of tissue distribution, expressed asymmetrically in ASE right (ASER) sensory neuron and bilaterally in ASI sensory neurons. Expressed in PVT interneuron.

Its subcellular location is the cell membrane. The enzyme catalyses GTP = 3',5'-cyclic GMP + diphosphate. Guanylate cyclase involved in the production of the second messenger cGMP. The chain is Receptor-type guanylate cyclase gcy-3 from Caenorhabditis elegans.